The following is a 443-amino-acid chain: ATP-dependent protease ATPase subunit HslU (443 aa).

Residues isoleucine 18, 60–65, aspartate 256, glutamate 321, and arginine 393 each bind ATP; that span reads GVGKTE.

The protein belongs to the ClpX chaperone family. HslU subfamily. As to quaternary structure, a double ring-shaped homohexamer of HslV is capped on each side by a ring-shaped HslU homohexamer. The assembly of the HslU/HslV complex is dependent on binding of ATP.

The protein localises to the cytoplasm. ATPase subunit of a proteasome-like degradation complex; this subunit has chaperone activity. The binding of ATP and its subsequent hydrolysis by HslU are essential for unfolding of protein substrates subsequently hydrolyzed by HslV. HslU recognizes the N-terminal part of its protein substrates and unfolds these before they are guided to HslV for hydrolysis. The polypeptide is ATP-dependent protease ATPase subunit HslU (Buchnera aphidicola subsp. Schizaphis graminum (strain Sg)).